We begin with the raw amino-acid sequence, 789 residues long: MTGLSPSGDIKPLLDDESQRPRVITPFPSPKLTDLSMFQGEHKESLYWGTYRPQMYFGVRARTPKSLVAGLMWLVMKDGKPVMRHFCENSNDLKSFGWKEHNGRDFGRQELFEQNMVLETSFVKSEEGSLGYGGDWSIRINVQNMLNDDEVKRSTHLFFYLADEGCNGVNLGKDVLRLKESSVLASGSRQDVGNWQMHLKSQNHLETHYCGFKTPDIVNLSGLVQQNLTAQEEKSGLLQLSDSSEDSSNIYVFQISTTNQSTIDIAFVSGIKEETSNMENRIMSLTGLPLSSLLEEKHIAFNAKFNECFNLSDKLDPETLVVGKAAIGNMLGGIGYFYGQSKIHFPKSPLAKSEDDFLLYWPAELYTAVPSRPRFPRGFLWDEGFHQLLIWRWDVHITLEIVGNWLDLMNIDGWIPREQVLGAEALSKIPKQYVVQFPSNGNPPTLLLVIRDLINGIRTEKFNEADRDKILSFLDRAFVRLDAWFKWFNTSQIGKEKGSYYWHGRDNITNRELNPQSLSSGLDDYPRASHPNEDERHVDLRCWMYLAADSMNSIQEFMGKNDILVTEDYSSIAKLLSDFTLLNQMHYDKDHGAYLDFGNHTEEVRLVWKEVIHEDGHLSRELVRETYGKPELRLVPHIGYVSFFPFMFRIIPADSSILDKQLDLISNGNIVWSDYGLLSLAKTSSLYMKYNSEHQAPYWRGAIWMNMNYMILSSLHHYSTVDGPYNSKARTIYEELRSNLIRNVVRNYDQTGIIWEHYDQTKGTGEGARVFTGWSALILLIMSEEYPLF.

Disordered stretches follow at residues 1-24 and 512-531; these read MTGLSPSGDIKPLLDDESQRPRVI and ELNPQSLSSGLDDYPRASHP. Residue aspartate 523 is the Proton donor of the active site. Glutamate 756 functions as the Proton acceptor in the catalytic mechanism.

It belongs to the glycosyl hydrolase 63 family.

The protein operates within glycan metabolism; N-glycan degradation. The sequence is that of Alpha-glucosidase 2 (GCS2) from Arabidopsis thaliana (Mouse-ear cress).